A 368-amino-acid polypeptide reads, in one-letter code: Peptide chain release factor 2 (368 aa).

The disordered stretch occupies residues 36–56 (EAQAGDPSLWDDPDHAQKVTS). Glutamine 250 carries the N5-methylglutamine modification.

It belongs to the prokaryotic/mitochondrial release factor family. In terms of processing, methylated by PrmC. Methylation increases the termination efficiency of RF2.

It localises to the cytoplasm. Its function is as follows. Peptide chain release factor 2 directs the termination of translation in response to the peptide chain termination codons UGA and UAA. The protein is Peptide chain release factor 2 of Corynebacterium aurimucosum (strain ATCC 700975 / DSM 44827 / CIP 107346 / CN-1) (Corynebacterium nigricans).